The following is a 346-amino-acid chain: UDP-N-acetylenolpyruvoylglucosamine reductase (346 aa).

Residues 17 to 187 form the FAD-binding PCMH-type domain; the sequence is IESQAYALIE…VAVGFTLKKE (171 aa). Arg-163 is a catalytic residue. The Proton donor role is filled by Ser-233. Glu-329 is a catalytic residue.

The protein belongs to the MurB family. FAD serves as cofactor.

It is found in the cytoplasm. The enzyme catalyses UDP-N-acetyl-alpha-D-muramate + NADP(+) = UDP-N-acetyl-3-O-(1-carboxyvinyl)-alpha-D-glucosamine + NADPH + H(+). It participates in cell wall biogenesis; peptidoglycan biosynthesis. Cell wall formation. This is UDP-N-acetylenolpyruvoylglucosamine reductase from Photobacterium profundum (strain SS9).